The following is a 77-amino-acid chain: Translation initiation factor IF-1, chloroplastic (77 aa).

Residues 1 to 71 (MKEQKLIHEG…TRGRIIYRLR (71 aa)) form the S1-like domain.

This sequence belongs to the IF-1 family. As to quaternary structure, component of the 30S ribosomal translation pre-initiation complex which assembles on the 30S ribosome in the order IF-2 and IF-3, IF-1 and N-formylmethionyl-tRNA(fMet); mRNA recruitment can occur at any time during PIC assembly.

It localises to the plastid. The protein resides in the chloroplast. Its function is as follows. One of the essential components for the initiation of protein synthesis. Stabilizes the binding of IF-2 and IF-3 on the 30S subunit to which N-formylmethionyl-tRNA(fMet) subsequently binds. Helps modulate mRNA selection, yielding the 30S pre-initiation complex (PIC). Upon addition of the 50S ribosomal subunit IF-1, IF-2 and IF-3 are released leaving the mature 70S translation initiation complex. This chain is Translation initiation factor IF-1, chloroplastic, found in Liriodendron tulipifera (Tuliptree).